A 242-amino-acid polypeptide reads, in one-letter code: Protein odd-skipped-related 1 (242 aa).

3 C2H2-type zinc fingers span residues 128-150 (FICK…ERTH), 156-178 (FHCE…KYIH), and 184-207 (HKCE…SCHH).

Belongs to the Odd C2H2-type zinc-finger protein family.

The protein resides in the nucleus. Functionally, may function as transcription regulator. Essential for larval development. Required for morphogenesis and function of the digestive tract. This is Protein odd-skipped-related 1 from Caenorhabditis elegans.